Here is a 339-residue protein sequence, read N- to C-terminus: Large ribosomal subunit protein uL29 (339 aa).

The large ribosomal subunit protein uL29 stretch occupies residues M1–E96. The segment at Q97–K339 is unknown. Disordered stretches follow at residues V129–K254 and K311–K339. Residues A145–K156 are compositionally biased toward low complexity. Basic and acidic residues predominate over residues D157–A170. The segment covering T171–A182 has biased composition (low complexity). Residues A185–A210 show a composition bias toward basic and acidic residues. The segment covering K217–K238 has biased composition (low complexity). Residues A239–S248 show a composition bias toward basic and acidic residues.

The protein belongs to the universal ribosomal protein uL29 family. Forms homomultimers. Part of the ribosome; radioactive IRS binds to purified ribosomes.

Specifically binds a DNA inverted repeat sequence (IRS) found downstream of rpsB in one of the ribosomal subunit operons (for genes rpsB, tsf, and unknown gene x). Might be involved in regulation of transcription of the rpsB operon; the IRS may be a control element to attenuate transcription. This is Large ribosomal subunit protein uL29 from Spiroplasma citri.